The primary structure comprises 589 residues: Arylsulfatase L (589 aa).

A signal peptide spans 1 to 31 (MLHLHHSCLCFRSWLPAMLAVLLSLAPSASS). Residues Asp-46 and Asp-47 each contribute to the Ca(2+) site. N-linked (GlcNAc...) asparagine glycosylation is present at Asn-58. Cys-86 serves as a coordination point for Ca(2+). Catalysis depends on Cys-86, which acts as the Nucleophile. Cys-86 carries the 3-oxoalanine (Cys) modification. N-linked (GlcNAc...) asparagine glycosylation is present at Asn-125. Residue Lys-145 participates in substrate binding. His-147 is an active-site residue. Asn-258 is a glycosylation site (N-linked (GlcNAc...) asparagine). His-301 serves as a coordination point for substrate. Asn-344 carries an N-linked (GlcNAc...) asparagine glycan. 2 residues coordinate Ca(2+): Asp-353 and His-354. Lys-378 contacts substrate.

This sequence belongs to the sulfatase family. Ca(2+) is required as a cofactor. Post-translationally, N-glycosylated. In terms of processing, the conversion to 3-oxoalanine (also known as C-formylglycine, FGly), of a serine or cysteine residue in prokaryotes and of a cysteine residue in eukaryotes, is critical for catalytic activity. In terms of tissue distribution, expressed in the pancreas, liver and kidney.

Its subcellular location is the golgi apparatus. The protein resides in the golgi stack. It catalyses the reaction an aryl sulfate + H2O = a phenol + sulfate + H(+). Inhibited by millimolar concentrations of warfarin. Its function is as follows. Exhibits arylsulfatase activity towards the artificial substrate 4-methylumbelliferyl sulfate. May be essential for the correct composition of cartilage and bone matrix during development. Has no activity toward steroid sulfates. This chain is Arylsulfatase L, found in Homo sapiens (Human).